We begin with the raw amino-acid sequence, 167 residues long: MFPMVTGFMNYGQQTVRAARYIGQSFMITLSHANRLPVTIQYPYEKLITSERFRGRIHFEFDKCIACEVCVRVCPIDLPVVDWKLETDIRKKQLLNYSIDFGICIFCGNCVEYCPTNCLSMTEEYELSTYDRHELNYNQIALGRLPMSVIDDYTIRTILNSPQITSE.

4Fe-4S ferredoxin-type domains are found at residues 55-84 (GRIHFEFDKCIACEVCVRVCPIDLPVVDWK) and 95-124 (LNYSIDFGICIFCGNCVEYCPTNCLSMTEE). Positions 64, 67, 70, 74, 104, 107, 110, and 114 each coordinate [4Fe-4S] cluster.

It belongs to the complex I 23 kDa subunit family. NDH is composed of at least 16 different subunits, 5 of which are encoded in the nucleus. It depends on [4Fe-4S] cluster as a cofactor.

Its subcellular location is the plastid. It localises to the chloroplast thylakoid membrane. It carries out the reaction a plastoquinone + NADH + (n+1) H(+)(in) = a plastoquinol + NAD(+) + n H(+)(out). The enzyme catalyses a plastoquinone + NADPH + (n+1) H(+)(in) = a plastoquinol + NADP(+) + n H(+)(out). Its function is as follows. NDH shuttles electrons from NAD(P)H:plastoquinone, via FMN and iron-sulfur (Fe-S) centers, to quinones in the photosynthetic chain and possibly in a chloroplast respiratory chain. The immediate electron acceptor for the enzyme in this species is believed to be plastoquinone. Couples the redox reaction to proton translocation, and thus conserves the redox energy in a proton gradient. The chain is NAD(P)H-quinone oxidoreductase subunit I, chloroplastic from Vitis vinifera (Grape).